Here is a 271-residue protein sequence, read N- to C-terminus: Thioredoxin-related transmembrane protein 2 homolog (271 aa).

The N-terminal stretch at 1–28 (MTWKKQMALLAKPYYWVNILLAISYLLA) is a signal peptide. The Extracellular segment spans residues 29 to 102 (KKTQFICTRL…AILWAYADFR (74 aa)). The helical transmembrane segment at 103–123 (YGLGFLLLCVLVGMVLPEPSY) threads the bilayer. Residues 112-262 (VLVGMVLPEP…YKEAIERLPI (151 aa)) enclose the Thioredoxin domain. Residues 124 to 271 (RGPEHITYFR…IAPKEAKKVQ (148 aa)) are Cytoplasmic-facing. Residues 268–271 (KKVQ) carry the Di-lysine motif motif.

It localises to the membrane. This chain is Thioredoxin-related transmembrane protein 2 homolog, found in Drosophila melanogaster (Fruit fly).